A 180-amino-acid chain; its full sequence is UPF0227 protein YcfP (180 aa).

The protein belongs to the UPF0227 family.

The chain is UPF0227 protein YcfP from Salmonella paratyphi A (strain ATCC 9150 / SARB42).